The chain runs to 201 residues: Ribonuclease HII (201 aa).

Positions 12–201 (DLVAGVDEVG…VRELLDVSVQ (190 aa)) constitute an RNase H type-2 domain. Positions 18, 19, and 110 each coordinate a divalent metal cation.

The protein belongs to the RNase HII family. The cofactor is Mn(2+). Mg(2+) is required as a cofactor.

It localises to the cytoplasm. It catalyses the reaction Endonucleolytic cleavage to 5'-phosphomonoester.. Its function is as follows. Endonuclease that specifically degrades the RNA of RNA-DNA hybrids. The chain is Ribonuclease HII from Pseudomonas aeruginosa (strain LESB58).